A 236-amino-acid polypeptide reads, in one-letter code: Ribosome assembly factor mrt4 (236 aa).

This sequence belongs to the universal ribosomal protein uL10 family. In terms of assembly, associates with the pre-60S ribosomal particle.

It is found in the nucleus. Its subcellular location is the nucleolus. The protein resides in the cytoplasm. Component of the ribosome assembly machinery. Nuclear paralog of the ribosomal protein P0, it binds pre-60S subunits at an early stage of assembly in the nucleolus, and is replaced by P0 in cytoplasmic pre-60S subunits and mature 80S ribosomes. This Eremothecium gossypii (strain ATCC 10895 / CBS 109.51 / FGSC 9923 / NRRL Y-1056) (Yeast) protein is Ribosome assembly factor mrt4.